Consider the following 344-residue polypeptide: Eukaryotic translation initiation factor 2 subunit alpha (344 aa).

The S1 motif domain occupies 21-92 (DMAVMIQVKT…ERGYIDLSKR (72 aa)). Position 56 is a phosphoserine; by GCN2 (Ser-56). Positions 309–344 (LRMDNEEMSGDEGSEDEEEDTGMGEVDIDGGSGIIE) are disordered. A compositionally biased stretch (acidic residues) spans 314 to 336 (EEMSGDEGSEDEEEDTGMGEVDI). Ser-317 and Ser-322 each carry phosphoserine; by CK2.

Belongs to the eIF-2-alpha family. As to quaternary structure, eukaryotic translation initiation factor 2 eIF2 is a heterotrimeric complex composed of an alpha, a beta and a gamma subunit. Phosphorylated at Ser-56 by GCN2. Phosphorylated at Ser-317 and Ser-322 by CK2.

The protein resides in the cytoplasm. The protein localises to the cytosol. Functionally, functions in the early steps of protein synthesis by forming a ternary complex with GTP and initiator tRNA. This complex binds to a 40S ribosomal subunit, followed by mRNA binding to form a 43S pre-initiation complex. Junction of the 60S ribosomal subunit to form the 80S initiation complex is preceded by hydrolysis of the GTP bound to eIF-2 and release of an eIF-2-GDP binary complex. In order for eIF-2 to recycle and catalyze another round of initiation, the GDP bound to eIF-2 must exchange with GTP by way of a reaction catalyzed by eIF2B. The polypeptide is Eukaryotic translation initiation factor 2 subunit alpha (Arabidopsis thaliana (Mouse-ear cress)).